Reading from the N-terminus, the 333-residue chain is Probable HTH-type transcriptional repressor ExuR (333 aa).

The 55-residue stretch at 2 to 56 folds into the HTH lacI-type domain; sequence VTIKDIAKLANVSHTTVSRALNNSPYIKEHTKKKILELAEQLNYTPNVNAKSLAM. Positions 4–23 form a DNA-binding region, H-T-H motif; that stretch reads IKDIAKLANVSHTTVSRALN.

Transcriptional repressor for the exu locus which is required for galacturonate utilization. The chain is Probable HTH-type transcriptional repressor ExuR (exuR) from Bacillus subtilis (strain 168).